The sequence spans 488 residues: V-type proton ATPase subunit B 1 (488 aa).

This sequence belongs to the ATPase alpha/beta chains family. As to quaternary structure, V-ATPase is a heteromultimeric enzyme composed of a peripheral catalytic V1 complex (main components: subunits A, B, C, D, E, and F) attached to an integral membrane V0 proton pore complex (main component: the proteolipid protein).

Functionally, non-catalytic subunit of the peripheral V1 complex of vacuolar ATPase. V-ATPase is responsible for acidifying a variety of intracellular compartments in eukaryotic cells. The chain is V-type proton ATPase subunit B 1 from Hordeum vulgare (Barley).